Reading from the N-terminus, the 230-residue chain is Large ribosomal subunit protein uL1 (230 aa).

The protein belongs to the universal ribosomal protein uL1 family. As to quaternary structure, part of the 50S ribosomal subunit.

Functionally, binds directly to 23S rRNA. The L1 stalk is quite mobile in the ribosome, and is involved in E site tRNA release. Protein L1 is also a translational repressor protein, it controls the translation of the L11 operon by binding to its mRNA. This Acidiphilium cryptum (strain JF-5) protein is Large ribosomal subunit protein uL1.